We begin with the raw amino-acid sequence, 1758 residues long: Collagen alpha-2(IV) chain (1758 aa).

An N-terminal signal peptide occupies residues 1–26; sequence MKQRAALGPVLRLAILALLAVSYVQS. The 7S domain stretch occupies residues 27-42; the sequence is QATCRDCSNRGCFCVG. A triple-helical region region spans residues 42–1527; that stretch reads GEKGSMGAPG…PGAPGAAGPA (1486 aa). The span at 47–62 shows a compositional bias: low complexity; sequence MGAPGPQGPPGTQGIR. Disordered stretches follow at residues 47-943, 955-1304, 1316-1339, and 1367-1525; these read MGAP…GAPG, GVPG…GLPG, GFPG…DGLP, and GFPG…GAAG. A compositionally biased stretch (gly residues) spans 102–111; the sequence is GNDGGNGRPG. Positions 134-149 are enriched in pro residues; the sequence is PGRPGPPGMPGFPGPP. The segment covering 189–198 has biased composition (basic and acidic residues); the sequence is YPGEKGDRGD. Residues 224 to 234 are compositionally biased toward low complexity; it reads PKGDPGDLGSV. O-linked (Xyl...) (glycosaminoglycan) serine glycosylation occurs at Ser248. Residues 258-267 are compositionally biased toward basic and acidic residues; the sequence is PGEKGDKGEP. A compositionally biased stretch (gly residues) spans 268–283; the sequence is GEGGQRGYPGNGGLSG. Residues 367–382 show a composition bias toward pro residues; it reads PGPPGLPGRPGNPGPP. Gly residues predominate over residues 398–407; that stretch reads GNTGGPGLPG. Composition is skewed to low complexity over residues 408–417 and 429–439; these read YPGNEGLPGP and APGVSGPSGIP. Over residues 464-479 the composition is skewed to basic and acidic residues; it reads KDGKPGLDGAPGRKGE. Composition is skewed to low complexity over residues 495-509 and 568-584; these read GLPG…PGPN and PVGD…AGRP. Over residues 638 to 648 the composition is skewed to pro residues; it reads PSGPVGPPGAP. 3 stretches are compositionally biased toward gly residues: residues 693 to 702, 737 to 746, and 782 to 791; these read GAKGDGGLPG, GTKGEGGYPG, and GDKGFGGVPG. The span at 839–858 shows a compositional bias: low complexity; it reads LPGLPGTPGLEGQRGFPGAP. The segment covering 859–868 has biased composition (gly residues); that stretch reads GLKGGDGLPG. The segment covering 929-938 has biased composition (low complexity); sequence APGQSGAPGL. Gly residues predominate over residues 958-967; that stretch reads GFKGDGGLPG. Residues 968-980 are compositionally biased toward low complexity; sequence LPGLNGPKGEPGV. The span at 988–997 shows a compositional bias: gly residues; the sequence is GMKGNGGLPG. The span at 1040–1056 shows a compositional bias: low complexity; sequence LPGQPGLRGPQGPSGLP. Positions 1194 to 1203 are enriched in gly residues; the sequence is GLPGLGGEKG. Positions 1237 to 1250 are enriched in low complexity; the sequence is FPGQPGQEGLPGLS. Residues 1251 to 1260 show a composition bias toward gly residues; it reads GEKGMGGLPG. Residues 1373 to 1382 show a composition bias toward gly residues; that stretch reads GLKGEGGLPG. Composition is skewed to low complexity over residues 1413–1425 and 1433–1454; these read LPGR…ADGP and GPQN…APGL. 2 stretches are compositionally biased toward gly residues: residues 1492–1501 and 1507–1516; these read GEKGMGGLPG and GQPGGPGAPG. The region spanning 1531–1754 is the Collagen IV NC1 domain; that stretch reads GFVLVKHSQT…SRCQVCVKST (224 aa). Intrachain disulfides connect Cys1546–Cys1635, Cys1579–Cys1632, Cys1591–Cys1597, Cys1654–Cys1750, Cys1688–Cys1747, and Cys1700–Cys1707.

This sequence belongs to the type IV collagen family. As to quaternary structure, trimers of two alpha 1(IV) and one alpha 2(IV) chain. Type IV collagen forms a mesh-like network linked through intermolecular interactions between 7S domains and between NC1 domains. In terms of processing, prolines at the third position of the tripeptide repeating unit (G-X-Y) are hydroxylated in some or all of the chains. Type IV collagens contain numerous cysteine residues which are involved in inter- and intramolecular disulfide bonding. 12 of these, located in the NC1 domain, are conserved in all known type IV collagens. Post-translationally, the trimeric structure of the NC1 domains is stabilized by covalent bonds between Lys and Met residues. Localizes to the basement membrane between distal tip cells and the germline. Localizes to the intestinal basement membrane.

It localises to the secreted. Its subcellular location is the extracellular space. It is found in the extracellular matrix. The protein localises to the basement membrane. In terms of biological role, collagen type IV is specific for basement membranes. Together with fbl-1 and downstream of metalloprotease mig-17, recruits nidogen nid-1 to the gonad basement membrane thereby probably inducing basement membrane remodeling required for the directional migration of distal tip cells. Required to restrict presynaptic growth at the neuromuscular junctions in late larval stage and in adult motor neurons. Vital for embryonic development. The protein is Collagen alpha-2(IV) chain of Caenorhabditis elegans.